The primary structure comprises 411 residues: Multifunctional CCA protein (411 aa).

2 residues coordinate ATP: Gly8 and Arg11. Positions 8 and 11 each coordinate CTP. Residues Asp21 and Asp23 each contribute to the Mg(2+) site. ATP-binding residues include Arg91, Arg137, and Arg140. 3 residues coordinate CTP: Arg91, Arg137, and Arg140. Residues Cys228 to Trp329 enclose the HD domain.

This sequence belongs to the tRNA nucleotidyltransferase/poly(A) polymerase family. Bacterial CCA-adding enzyme type 1 subfamily. In terms of assembly, monomer. Can also form homodimers and oligomers. Requires Mg(2+) as cofactor. Ni(2+) serves as cofactor.

The enzyme catalyses a tRNA precursor + 2 CTP + ATP = a tRNA with a 3' CCA end + 3 diphosphate. The catalysed reaction is a tRNA with a 3' CCA end + 2 CTP + ATP = a tRNA with a 3' CCACCA end + 3 diphosphate. Functionally, catalyzes the addition and repair of the essential 3'-terminal CCA sequence in tRNAs without using a nucleic acid template. Adds these three nucleotides in the order of C, C, and A to the tRNA nucleotide-73, using CTP and ATP as substrates and producing inorganic pyrophosphate. tRNA 3'-terminal CCA addition is required both for tRNA processing and repair. Also involved in tRNA surveillance by mediating tandem CCA addition to generate a CCACCA at the 3' terminus of unstable tRNAs. While stable tRNAs receive only 3'-terminal CCA, unstable tRNAs are marked with CCACCA and rapidly degraded. The sequence is that of Multifunctional CCA protein from Photobacterium profundum (strain SS9).